The chain runs to 284 residues: Riboflavin transporter (284 aa).

2 consecutive EamA domains span residues 2-129 (VAAC…LIII) and 141-273 (LLPI…SLYL). 8 helical membrane passes run 26–46 (SVII…PLLV), 58–78 (FGLH…WIYA), 82–102 (VPIW…ILCA), 115–135 (LLTT…WSDS), 136–156 (YTVY…YSVM), 167–187 (ASIS…LWLA), 195–215 (ITAP…FTAL), and 247–267 (GWIV…ALII).

It belongs to the drug/metabolite transporter (DMT) superfamily. 10 TMS drug/metabolite exporter (DME) (TC 2.A.7.3) family.

It is found in the cell membrane. Transports riboflavin into the cell. This Brucella anthropi (strain ATCC 49188 / DSM 6882 / CCUG 24695 / JCM 21032 / LMG 3331 / NBRC 15819 / NCTC 12168 / Alc 37) (Ochrobactrum anthropi) protein is Riboflavin transporter.